Consider the following 310-residue polypeptide: MPRTDNDSWDLATSVGATATMVAAARAIATNADNPLIADRFAEPLVRAVGVDFFTRWVTGDLVVADVDDTESGWQLAQMPDAMAVRARFFDAFFQDATRAGVRQAVILASGLDARAYRLDWPAGMTVFEIDQPEVIAFKTTTLAGLGAVPRADLRTVAVDLRQDWPKALTEAGFDAGRPTAWIAEGLFGYLPPEAQDRLLDNITALSATGSRLACEAIPNRPQQDAEKARELMRKATARWREHGFELEFGDLGYEGDRADVELYLQNLGWQSVGTQMSQLLADNGAAPIPHNNDSVTMADTIYYSSVLTA.

S-adenosyl-L-methionine-binding positions include aspartate 131 and 160-161 (DL).

Belongs to the UPF0677 family.

In terms of biological role, exhibits S-adenosyl-L-methionine-dependent methyltransferase activity. The polypeptide is Putative S-adenosyl-L-methionine-dependent methyltransferase MUL_2766 (Mycobacterium ulcerans (strain Agy99)).